Reading from the N-terminus, the 217-residue chain is Serine acetyltransferase (217 aa).

It belongs to the transferase hexapeptide repeat family.

It is found in the cytoplasm. It catalyses the reaction L-serine + acetyl-CoA = O-acetyl-L-serine + CoA. Its pathway is amino-acid biosynthesis; L-cysteine biosynthesis; L-cysteine from L-serine: step 1/2. With respect to regulation, inhibited by cysteine. Catalyzes the acetylation of serine by acetyl-CoA to produce O-acetylserine (OAS). The polypeptide is Serine acetyltransferase (cysE) (Bacillus subtilis (strain 168)).